The chain runs to 153 residues: Protein-export protein SecB (153 aa).

The protein belongs to the SecB family. As to quaternary structure, homotetramer, a dimer of dimers. One homotetramer interacts with 1 SecA dimer.

Its subcellular location is the cytoplasm. Its function is as follows. One of the proteins required for the normal export of preproteins out of the cell cytoplasm. It is a molecular chaperone that binds to a subset of precursor proteins, maintaining them in a translocation-competent state. It also specifically binds to its receptor SecA. The protein is Protein-export protein SecB of Erwinia tasmaniensis (strain DSM 17950 / CFBP 7177 / CIP 109463 / NCPPB 4357 / Et1/99).